We begin with the raw amino-acid sequence, 381 residues long: Prostatic acid phosphatase (381 aa).

The first 31 residues, 1–31 (MRAVPLPLSRTASLSLGFLLLLSLCLDPGQA), serve as a signal peptide directing secretion. R42 lines the substrate pocket. H43 (nucleophile) is an active-site residue. Residue R46 participates in substrate binding. An N-linked (GlcNAc...) asparagine glycan is attached at N93. R110 serves as a coordination point for substrate. 3 disulfide bridges follow: C160/C371, C214/C312, and C346/C350. N219 carries N-linked (GlcNAc...) asparagine glycosylation. Position 288 (H288) interacts with substrate. D289 acts as the Proton donor in catalysis. N332 carries an N-linked (GlcNAc...) asparagine glycan.

It belongs to the histidine acid phosphatase family. In terms of assembly, homodimer; dimer formation is required for phosphatase activity. Expressed in salivary gland, thymus and thyroid gland. In terms of tissue distribution, widely expressed in prostate lobes, brain, kidney, liver, lung, muscle, placenta, salivary gland, spleen, thyroid and thymus. Locates to Schwann cells and fibroblasts. Expressed in peptidergic and non-peptidergic nociceptive (pain-sensing) neurons. Preferentially expressed in non-peptidergic doral root ganglia neurons.

The protein resides in the secreted. It localises to the cell membrane. It is found in the lysosome membrane. It carries out the reaction a phosphate monoester + H2O = an alcohol + phosphate. The enzyme catalyses a ribonucleoside 5'-phosphate + H2O = a ribonucleoside + phosphate. The catalysed reaction is 1-(9Z-octadecenoyl)-sn-glycero-3-phosphate + H2O = 1-(9Z-octadecenoyl)-sn-glycerol + phosphate. It catalyses the reaction O-phospho-L-tyrosyl-[protein] + H2O = L-tyrosyl-[protein] + phosphate. A non-specific tyrosine phosphatase that dephosphorylates a diverse number of substrates under acidic conditions (pH 4-6) including alkyl, aryl, and acyl orthophosphate monoesters and phosphorylated proteins. Has lipid phosphatase activity and inactivates lysophosphatidic acid in seminal plasma. In terms of biological role, in addition to its tyrosine phosphatase activity, also has ecto-5'-nucleotidase activity in dorsal root ganglion (DRG) neurons. Generates adenosine from AMP. This extracellular adenosine leads to a decrease in chronic pain by activating A1R in nociceptive neurons. This is Prostatic acid phosphatase (Acp3) from Mus musculus (Mouse).